Here is a 2348-residue protein sequence, read N- to C-terminus: Transcription factor HIVEP3 (2348 aa).

Residues 1 to 105 (MDPDQSIKGT…AFMSPGKPEH (105 aa)) form a disordered region. Positions 27–72 (IQTSVSSSAPYPGSGTTAPSESATQELLATQPFSGPSQEKTGQQQK) are enriched in polar residues. 2 consecutive C2H2-type zinc fingers follow at residues 185–207 (YICQYCSRPCAKPSVLQKHIRSH) and 213–235 (YPCGPCGFSFKTKSNLYKHRKSH). The ZAS1 stretch occupies residues 185–235 (YICQYCSRPCAKPSVLQKHIRSHTGERPYPCGPCGFSFKTKSNLYKHRKSH). The interval 204–1055 (IRSHTGERPY…KGKQESSEEP (852 aa)) is no DNA binding activity or transactivation activity, but complete prevention of TRAF-dependent NF-Kappa-B activation; associates with TRAF2 and JUN. 3 disordered regions span residues 239-401 (IKAG…SPPN), 475-532 (DSVK…PLLR), and 561-628 (ADPE…TKKG). An acidic 1 region spans residues 257-280 (EMERIPGEEFEEPTEGESTDSEEE). The span at 264-281 (EEFEEPTEGESTDSEEET) shows a compositional bias: acidic residues. The span at 298 to 323 (PLLSSSLYSSGSHGSSQERCSLSQSS) shows a compositional bias: low complexity. Residues 338–352 (SSEHPLSHKPEDTHT) are compositionally biased toward basic and acidic residues. 2 stretches are compositionally biased toward polar residues: residues 372–401 (TFLSPGSKGSTESGYFSRSESAEQQVSPPN) and 485–495 (TRRSSVESPKS). Composition is skewed to low complexity over residues 513 to 527 (QSLLSLQHPPSSTHP) and 589 to 605 (PLGGEYSSEEPGPSSKD). A compositionally biased stretch (basic and acidic residues) spans 606–623 (PTSKPSDEPEPKESDLTK). Residues 633-663 (GANYECTICGARYKKRDNYEAHKKYYCSELQ) form a CCHC HIVEP-type zinc finger. 5 disordered regions span residues 692–1098 (KLGA…PPYT), 1229–1274 (LPPV…TSAP), 1386–1427 (EGCS…KADE), 1441–1555 (STED…EGTD), and 1654–1694 (EVHL…GEPA). Over residues 736-749 (STKSPAEASKSAPS) the composition is skewed to low complexity. An acidic 2 region spans residues 844-865 (EEPDRPDTEPEPPPKEPEKTEE). Residues 845–865 (EPDRPDTEPEPPPKEPEKTEE) are compositionally biased toward basic and acidic residues. The Nuclear localization signal motif lies at 885–891 (PKKKRLR). Positions 893–929 (AEMAQSSGESSFESSVPLSRSPSQESSISLSGSSRSA) are enriched in low complexity. Over residues 930 to 939 (SFDREDHGKA) the composition is skewed to basic and acidic residues. Composition is skewed to polar residues over residues 975 to 985 (SEQSPNVPHSS), 1062 to 1073 (TKSSVPQISVGT), and 1247 to 1256 (SSSTEYSSDI). Residues 1409–1433 (METQQQKRVKEEEASKADEKLELVS) are a coiled coil. Composition is skewed to basic and acidic residues over residues 1416–1427 (RVKEEEASKADE), 1442–1452 (TEDRKKTEKPH), and 1518–1527 (VKKEDPKEQT). Residues 1538 to 1547 (LPLSDTSPKP) are compositionally biased toward low complexity. Positions 1665 to 1694 (SQKDPARVEKEEKQGKAEEGTPTSKRGEPA) are enriched in basic and acidic residues. 2 C2H2-type zinc fingers span residues 1720–1742 (YVCEECGIRCKKPSMLKKHIRTH) and 1748–1772 (YVCKHCHFAFKTKGNLTKHMKSKAH). Residues 1720 to 1772 (YVCEECGIRCKKPSMLKKHIRTHTDVRPYVCKHCHFAFKTKGNLTKHMKSKAH) are ZAS2. The segment at 1783–1841 (EELEAEEGTSDDLHQDSEGQEGAEAVEEHQFSDLEDSDSDSDLDEDEEEEEEEEESQDE) is acidic 3. Disordered regions lie at residues 1786–1990 (EAEE…HLCG) and 2009–2038 (PAGLERATDTGTPRYSPTRRWSLGQAESPP). Residues 1815-1840 (DLEDSDSDSDLDEDEEEEEEEEESQD) show a composition bias toward acidic residues. Polar residues predominate over residues 1871–1902 (PDSTSDEVPQGSSISEATHLTASSCSTPSRGT). A run of 5 repeats spans residues 1897-1900 (TPSR), 1927-1930 (SPRR), 1933-1936 (SPSK), 1961-1964 (SPAR), and 2024-2027 (SPTR). Positions 1952-1961 (KNDSSPQQCS) are enriched in polar residues. Positions 2053–2148 (SPSADKSGLG…QLLSRAPCPL (96 aa)) are 5 X 4 AA tandem repeats of [ST]-P-X-[RK]. Disordered stretches follow at residues 2184-2265 (SDLT…QGHQ) and 2284-2348 (KASS…PPSI). The span at 2203 to 2216 (SPSASVSPVAKVSK) shows a compositional bias: low complexity. A compositionally biased stretch (polar residues) spans 2293–2314 (RSSSMDCLAETSTYSPPRSRNL).

Interacts with TRAF1 and TRAF2 as well as with JUN. Forms a multimeric complex with RUNX2 and E3 ubiquitin ligase WWP1. Phosphorylated on threonine and serine residues. Phosphorylation by cyclin-dependent kinase CDK1 decreases HIVEP3 DNA binding affinity, and by epidermal growth factor receptor kinase increases its DNA binding affinity. Expressed in macrophages, lymphocytes, brain, thymus, spleen and bone marrow. Expressed in osteoblasts, whole bone and, to a lesser extent, in osteoclasts.

It is found in the cytoplasm. Its subcellular location is the nucleus. In terms of biological role, plays a role of transcription factor; binds to recognition signal sequences (Rss heptamer) for somatic recombination of immunoglobulin and T-cell receptor gene segments; Also binds to the kappa-B motif of gene such as S100A4, involved in cell progression and differentiation. Kappa-B motif is a gene regulatory element found in promoters and enhancers of genes involved in immunity, inflammation, and growth and that responds to viral antigens, mitogens, and cytokines. Involvement of HIVEP3 in cell growth is strengthened by the fact that its down-regulation promotes cell cycle progression with ultimate formation of multinucleated giant cells. Strongly inhibits TNF-alpha-induced NF-kappa-B activation; Interferes with nuclear factor NF-kappa-B by several mechanisms: as transcription factor, by competing for Kappa-B motif and by repressing transcription in the nucleus; through a non transcriptional process, by inhibiting nuclear translocation of RELA by association with TRAF2, an adapter molecule in the tumor necrosis factor signaling, which blocks the formation of IKK complex. Interaction with TRAF proteins inhibits both NF-Kappa-B-mediated and c-Jun N-terminal kinase/JNK-mediated responses that include apoptosis and pro-inflammatory cytokine gene expression. Positively regulates the expression of IL2 in T-cell. Essential regulator of adult bone formation. The sequence is that of Transcription factor HIVEP3 (Hivep3) from Mus musculus (Mouse).